The primary structure comprises 121 residues: Keratin-associated protein 1-4 (121 aa).

This sequence belongs to the KRTAP type 1 family. In terms of assembly, interacts with hair keratins. As to expression, expressed in the middle/upper portions of the hair cortex, in the region termed the keratogenous zone.

In terms of biological role, in the hair cortex, hair keratin intermediate filaments are embedded in an interfilamentous matrix, consisting of hair keratin-associated proteins (KRTAP), which are essential for the formation of a rigid and resistant hair shaft through their extensive disulfide bond cross-linking with abundant cysteine residues of hair keratins. The matrix proteins include the high-sulfur and high-glycine-tyrosine keratins. This is Keratin-associated protein 1-4 (KRTAP1-4) from Homo sapiens (Human).